The sequence spans 415 residues: Probable peptidoglycan glycosyltransferase FtsW (415 aa).

The next 11 membrane-spanning stretches (helical) occupy residues 31–51 (PILM…VTSA), 63–83 (FFFV…TVWL), 97–117 (LWIL…GIGH), 133–153 (IQVS…YIAT), 162–182 (ITGM…LLLQ), 185–205 (FGTT…ARAQ), 206–226 (WQMM…VVLS), 245–265 (FGHG…GVWG), 285–305 (FIFA…LIGL), 326–346 (IAGA…ALIN), and 361–381 (LPLM…LGFL).

The protein belongs to the SEDS family. FtsW subfamily.

Its subcellular location is the cell inner membrane. It carries out the reaction [GlcNAc-(1-&gt;4)-Mur2Ac(oyl-L-Ala-gamma-D-Glu-L-Lys-D-Ala-D-Ala)](n)-di-trans,octa-cis-undecaprenyl diphosphate + beta-D-GlcNAc-(1-&gt;4)-Mur2Ac(oyl-L-Ala-gamma-D-Glu-L-Lys-D-Ala-D-Ala)-di-trans,octa-cis-undecaprenyl diphosphate = [GlcNAc-(1-&gt;4)-Mur2Ac(oyl-L-Ala-gamma-D-Glu-L-Lys-D-Ala-D-Ala)](n+1)-di-trans,octa-cis-undecaprenyl diphosphate + di-trans,octa-cis-undecaprenyl diphosphate + H(+). Its pathway is cell wall biogenesis; peptidoglycan biosynthesis. Its function is as follows. Peptidoglycan polymerase that is essential for cell division. In Halothiobacillus neapolitanus (strain ATCC 23641 / c2) (Thiobacillus neapolitanus), this protein is Probable peptidoglycan glycosyltransferase FtsW.